Here is a 93-residue protein sequence, read N- to C-terminus: Large ribosomal subunit protein uL23cz/uL23cy (93 aa).

This sequence belongs to the universal ribosomal protein uL23 family. Part of the 50S ribosomal subunit.

The protein localises to the plastid. Its subcellular location is the chloroplast. Functionally, binds to 23S rRNA. This is Large ribosomal subunit protein uL23cz/uL23cy (rpl23-A) from Cucumis sativus (Cucumber).